A 157-amino-acid chain; its full sequence is Phospholipase A2 phaiodactylipin (157 aa).

W34 and G36 together coordinate Ca(2+). Cystine bridges form between C35–C56, C55–C94, C62–C87, C85–C127, and C132–C143. A glycan (N-linked (GlcNAc...) asparagine) is linked at N43. H59 is an active-site residue. D60 provides a ligand contact to Ca(2+). D88 is a catalytic residue. N101 carries an N-linked (GlcNAc...) asparagine glycan. Residues 134-139 (DEKSAR) constitute a propeptide, removed in mature form. An N-linked (GlcNAc...) asparagine glycan is attached at N153.

The protein belongs to the phospholipase A2 family. Group III subfamily. As to quaternary structure, heterodimer composed of a small subunit and a large subunit; disulfide-linked. The cofactor is Ca(2+). As to expression, expressed by the venom gland.

The protein localises to the secreted. It catalyses the reaction a 1,2-diacyl-sn-glycero-3-phosphocholine + H2O = a 1-acyl-sn-glycero-3-phosphocholine + a fatty acid + H(+). Scorpion venom phospholipase A2 (PLA2) that is lethal to crickets and crustaceae. Causes inflammation in mice and lysis of human erythrocytes. Has a mild anticoagulant effect on human platelets. PLA2 catalyzes the calcium-dependent hydrolysis of the 2-acyl groups in 3-sn-phosphoglycerides. In Anuroctonus phaiodactylus (Mafia scorpion), this protein is Phospholipase A2 phaiodactylipin.